The sequence spans 179 residues: Large ribosomal subunit protein bL9 (179 aa).

The disordered stretch occupies residues 156–179 (PEGAPVPVAEEPAAEAEQAEVAAE). Residues 157–166 (EGAPVPVAEE) are compositionally biased toward low complexity. Over residues 167-179 (PAAEAEQAEVAAE) the composition is skewed to acidic residues.

The protein belongs to the bacterial ribosomal protein bL9 family.

Binds to the 23S rRNA. The polypeptide is Large ribosomal subunit protein bL9 (Porphyromonas gingivalis (strain ATCC 33277 / DSM 20709 / CIP 103683 / JCM 12257 / NCTC 11834 / 2561)).